Consider the following 557-residue polypeptide: Formate--tetrahydrofolate ligase 2 (557 aa).

66–73 (TPAGEGKT) is a binding site for ATP.

It belongs to the formate--tetrahydrofolate ligase family.

The enzyme catalyses (6S)-5,6,7,8-tetrahydrofolate + formate + ATP = (6R)-10-formyltetrahydrofolate + ADP + phosphate. It participates in one-carbon metabolism; tetrahydrofolate interconversion. In Streptococcus pyogenes serotype M1, this protein is Formate--tetrahydrofolate ligase 2.